The chain runs to 340 residues: Phosphoribosylformylglycinamidine cyclo-ligase (340 aa).

Belongs to the AIR synthase family.

It localises to the cytoplasm. It carries out the reaction 2-formamido-N(1)-(5-O-phospho-beta-D-ribosyl)acetamidine + ATP = 5-amino-1-(5-phospho-beta-D-ribosyl)imidazole + ADP + phosphate + H(+). It participates in purine metabolism; IMP biosynthesis via de novo pathway; 5-amino-1-(5-phospho-D-ribosyl)imidazole from N(2)-formyl-N(1)-(5-phospho-D-ribosyl)glycinamide: step 2/2. This Streptococcus sanguinis (strain SK36) protein is Phosphoribosylformylglycinamidine cyclo-ligase.